The primary structure comprises 337 residues: Adenine deaminase (337 aa).

Positions 17, 19, and 197 each coordinate Zn(2+). The active-site Proton donor is E200. D278 is a Zn(2+) binding site. A substrate-binding site is contributed by D279.

The protein belongs to the metallo-dependent hydrolases superfamily. Adenosine and AMP deaminases family. Adenine deaminase type 2 subfamily. Requires Zn(2+) as cofactor.

It catalyses the reaction adenine + H2O + H(+) = hypoxanthine + NH4(+). Catalyzes the hydrolytic deamination of adenine to hypoxanthine. Plays an important role in the purine salvage pathway and in nitrogen catabolism. The chain is Adenine deaminase from Zymomonas mobilis subsp. mobilis (strain ATCC 31821 / ZM4 / CP4).